The following is a 331-amino-acid chain: Glyceraldehyde-3-phosphate dehydrogenase (331 aa).

NAD(+) is bound by residues 12-13, aspartate 34, arginine 78, and threonine 120; that span reads RI. Residues 149-151, threonine 180, 209-210, and arginine 232 contribute to the D-glyceraldehyde 3-phosphate site; these read SCT and TG. Cysteine 150 functions as the Nucleophile in the catalytic mechanism. Asparagine 314 lines the NAD(+) pocket.

It belongs to the glyceraldehyde-3-phosphate dehydrogenase family. In terms of assembly, homotetramer.

The protein resides in the cytoplasm. The enzyme catalyses D-glyceraldehyde 3-phosphate + phosphate + NAD(+) = (2R)-3-phospho-glyceroyl phosphate + NADH + H(+). The protein operates within carbohydrate degradation; glycolysis; pyruvate from D-glyceraldehyde 3-phosphate: step 1/5. Its function is as follows. Catalyzes the oxidative phosphorylation of glyceraldehyde 3-phosphate (G3P) to 1,3-bisphosphoglycerate (BPG) using the cofactor NAD. The first reaction step involves the formation of a hemiacetal intermediate between G3P and a cysteine residue, and this hemiacetal intermediate is then oxidized to a thioester, with concomitant reduction of NAD to NADH. The reduced NADH is then exchanged with the second NAD, and the thioester is attacked by a nucleophilic inorganic phosphate to produce BPG. This Escherichia fergusonii (strain ATCC 35469 / DSM 13698 / CCUG 18766 / IAM 14443 / JCM 21226 / LMG 7866 / NBRC 102419 / NCTC 12128 / CDC 0568-73) protein is Glyceraldehyde-3-phosphate dehydrogenase (gapA).